The chain runs to 55 residues: uncharacterized protein (55 aa).

A disordered region spans residues Met1–Asn25. A helical membrane pass occupies residues Thr35 to Phe55.

The protein localises to the membrane. This is an uncharacterized protein from Bacillus subtilis (strain 168).